The following is a 321-amino-acid chain: Bifunctional methyltransferase/endonuclease (321 aa).

The tract at residues 1 to 86 is probable methylated-DNA--protein-cysteine methyltransferase; sequence MLSVDYENFD…PLGSAEKMRR (86 aa). Cys61 is a catalytic residue. Residues 87–318 are endonuclease V; that stretch reads LIRDGITITN…YDFSTRNTAI (232 aa). Mg(2+) contacts are provided by Asp145 and Asp204.

It in the N-terminal section; belongs to the MGMT family. In the C-terminal section; belongs to the endonuclease V family. It depends on Mg(2+) as a cofactor.

It is found in the cytoplasm. It carries out the reaction Endonucleolytic cleavage at apurinic or apyrimidinic sites to products with a 5'-phosphate.. Functionally, DNA repair enzyme involved in the repair of deaminated bases. Selectively cleaves double-stranded DNA at the second phosphodiester bond 3' to a deoxyinosine leaving behind the intact lesion on the nicked DNA. The protein is Bifunctional methyltransferase/endonuclease of Thermoplasma volcanium (strain ATCC 51530 / DSM 4299 / JCM 9571 / NBRC 15438 / GSS1).